An 892-amino-acid chain; its full sequence is DNA mismatch repair protein MutS (892 aa).

Positions 663-684 (TNTSLREAAPTTTLSTSDQGQM) are disordered. Residue 696–703 (GPNASGKS) participates in ATP binding.

It belongs to the DNA mismatch repair MutS family.

In terms of biological role, this protein is involved in the repair of mismatches in DNA. It is possible that it carries out the mismatch recognition step. This protein has a weak ATPase activity. This chain is DNA mismatch repair protein MutS, found in Nostoc punctiforme (strain ATCC 29133 / PCC 73102).